The primary structure comprises 264 residues: Catechol O-methyltransferase B (264 aa).

Positions 1–29 are cleaved as a signal peptide; that stretch reads MLGVLLCWCLGASVLLYVLYSWLIPAAVQ. A glycan (N-linked (GlcNAc...) asparagine) is linked at N31. S-adenosyl-L-methionine is bound by residues V92, S122, E140, and D191. Residue D191 coordinates Mg(2+). Position 194 (K194) interacts with substrate. Mg(2+) is bound by residues D219 and N220. Substrate-binding residues include N220 and E249.

The protein belongs to the class I-like SAM-binding methyltransferase superfamily. Cation-dependent O-methyltransferase family. The cofactor is Mg(2+). Strongly expressed in eye, diencephalon, spinal cord, hindbrain, liver, kidney and telencephalon. Also detected at very low levels in muscle, spleen, anterior gut and heart. In eye, expressed strongly in retina. In brain, expressed in the central part of the telencephalon, the periventricular gray zone of the optic tectum, the periglomerular nucleus, the olfactory bulb, and the region adjacent to the diencephalic ventricle in the hypothalamus. Expressed in gill, with strongest expression in gill filaments nearest the gill arch, and in esophageal epithelium.

The protein localises to the secreted. The catalysed reaction is a catechol + S-adenosyl-L-methionine = a guaiacol + S-adenosyl-L-homocysteine + H(+). Its function is as follows. Catalyzes the O-methylation, and thereby the inactivation, of catecholamine neurotransmitters and catechol hormones. This chain is Catechol O-methyltransferase B, found in Danio rerio (Zebrafish).